A 484-amino-acid polypeptide reads, in one-letter code: Myosin-binding protein H (484 aa).

The segment at 1–78 (MTGKATPEAS…KPEAPSEDVP (78 aa)) is disordered. Phosphothreonine is present on residues Thr2, Thr6, and Thr26. The span at 41–71 (QEQAPEPQKQPQAQDPAAHEAPATPATTKPE) shows a compositional bias: low complexity. Residues 80 to 175 (APLQLTLEDV…LDQPVHIQEI (96 aa)) enclose the Fibronectin type-III 1 domain. One can recognise an Ig-like C2-type 1 domain in the interval 179 to 267 (PKIRVPRHLR…EGLEAKAAID (89 aa)). Residues 276 to 371 (PPSSIKLLDV…TKELAHIHKA (96 aa)) form the Fibronectin type-III 2 domain. One can recognise an Ig-like C2-type 2 domain in the interval 389-479 (PSFTQPVADR…PAVDCRLEVK (91 aa)).

Belongs to the immunoglobulin superfamily. MyBP family. Skeletal muscle.

Binds to myosin; probably involved in interaction with thick myofilaments in the A-band. In Rattus norvegicus (Rat), this protein is Myosin-binding protein H (Mybph).